We begin with the raw amino-acid sequence, 343 residues long: Photosystem II protein D1 (343 aa).

3 helical membrane passes run 28–45 (YIGW…VSTV), 117–132 (HFLA…EYEY), and 141–155 (WIYL…AASA). His117 provides a ligand contact to chlorophyll a. Trp125 lines the pheophytin a pocket. [CaMn4O5] cluster-binding residues include Asp169 and Glu188. The helical transmembrane segment at 196–217 (FHILGVSAVFGGSLFSAMHGSL) threads the bilayer. His197 is a chlorophyll a binding site. A quinone-binding positions include His214 and 263 to 264 (SF). His214 is a Fe cation binding site. His271 lines the Fe cation pocket. The helical transmembrane segment at 273–287 (FLAAWPVIGIWCTAI) threads the bilayer. [CaMn4O5] cluster is bound by residues His331, Glu332, Asp341, and Ala343.

This sequence belongs to the reaction center PufL/M/PsbA/D family. As to quaternary structure, PSII is composed of 1 copy each of membrane proteins PsbA, PsbB, PsbC, PsbD, PsbE, PsbF, PsbH, PsbI, PsbJ, PsbK, PsbL, PsbM, PsbT, PsbX, PsbY, PsbZ, Psb30/Ycf12, at least 3 peripheral proteins of the oxygen-evolving complex and a large number of cofactors. It forms dimeric complexes. It depends on The D1/D2 heterodimer binds P680, chlorophylls that are the primary electron donor of PSII, and subsequent electron acceptors. It shares a non-heme iron and each subunit binds pheophytin, quinone, additional chlorophylls, carotenoids and lipids. D1 provides most of the ligands for the Mn4-Ca-O5 cluster of the oxygen-evolving complex (OEC). There is also a Cl(-1) ion associated with D1 and D2, which is required for oxygen evolution. The PSII complex binds additional chlorophylls, carotenoids and specific lipids. as a cofactor. In terms of processing, tyr-160 forms a radical intermediate that is referred to as redox-active TyrZ, YZ or Y-Z.

It localises to the plastid. The protein resides in the chloroplast thylakoid membrane. It catalyses the reaction 2 a plastoquinone + 4 hnu + 2 H2O = 2 a plastoquinol + O2. Functionally, photosystem II (PSII) is a light-driven water:plastoquinone oxidoreductase that uses light energy to abstract electrons from H(2)O, generating O(2) and a proton gradient subsequently used for ATP formation. It consists of a core antenna complex that captures photons, and an electron transfer chain that converts photonic excitation into a charge separation. The D1/D2 (PsbA/PsbD) reaction center heterodimer binds P680, the primary electron donor of PSII as well as several subsequent electron acceptors. The sequence is that of Photosystem II protein D1 from Prorocentrum micans (Red tide dinoflagellate).